The sequence spans 581 residues: Penicillin-binding protein activator LpoA (581 aa).

Positions 1–26 are cleaved as a signal peptide; that stretch reads MLSILMQGLRLKKCFLPILVMFFLAG. Cys27 carries the N-palmitoyl cysteine lipid modification. Cys27 carries S-diacylglycerol cysteine lipidation.

It belongs to the LpoA family. Interacts with PBP1a.

It is found in the cell outer membrane. Its function is as follows. Regulator of peptidoglycan synthesis that is essential for the function of penicillin-binding protein 1A (PBP1a). This chain is Penicillin-binding protein activator LpoA, found in Histophilus somni (strain 129Pt) (Haemophilus somnus).